The following is an 899-amino-acid chain: Periodic tryptophan protein 2 homolog (899 aa).

13 WD repeats span residues 9–52 (NLLG…TLPF), 53–92 (SHRK…VLYH), 94–132 (SFKA…DANA), 149–188 (QHFD…GFTP), 193–232 (GHRQ…GQDE), 252–291 (QNSA…MIHT), 294–334 (ISQN…YILK), 337–376 (GHFD…CIVT), 379–418 (EHTS…NFRT), 422–464 (PERL…DRLS), 465–504 (GHEG…QTSE), 507–546 (QLNS…QQAG), and 569–608 (AGTK…LLKK). A disordered region spans residues 639–668 (DEQGEASDFEDRIDRSLPGSKRGDPSARRK). The segment covering 647–668 (FEDRIDRSLPGSKRGDPSARRK) has biased composition (basic and acidic residues). The WD 14 repeat unit spans residues 669–709 (NPEVRVNGVAFSPNGSAFCAASTEGLLIYSLDTTIQFDPFD). A disordered region spans residues 866-899 (TGSDEQPGAGGMSLNDVMQQDEGNASEDEWIGLV). Acidic residues predominate over residues 889 to 899 (NASEDEWIGLV).

It belongs to the WD repeat PWP2 family.

The sequence is that of Periodic tryptophan protein 2 homolog from Neurospora crassa (strain ATCC 24698 / 74-OR23-1A / CBS 708.71 / DSM 1257 / FGSC 987).